Here is a 396-residue protein sequence, read N- to C-terminus: MSDYNIFTSESVSEGHPDKLADQISDAVLDAILTDDPHARVACETMVKTGVAIVGGEITTSAWVDLEDLVRGVIKDIDYTSSEVGYDGDTCGVINIIGKQSVDIAQGVDRQKPEDQGAGDQGLMFGYASNETDVLMPAPITFSHRLVQRQAEARKSGLLPWLRPDAKSQVTCRYENGKVVGIDAVVLSTQHDPDVTQADLKEAVMELIVKHTLPAELLHKDTQFHINPTGKFVIGGPVGDCGLTGRKIIVDTYGGMARHGGGAFSGKDPSKVDRSAAYAGRYVAKNIVAAGLAEKCEIQVSYAIGVAQPTSISLNTFGTGKISDDKIIDLVRAHFDLRPYAITNMLDLLHPMYRATAAYGHFGRDPYEMTVGGKTFTAFPWEKTDRAAALKDAAGI.

Residue His-16 participates in ATP binding. Asp-18 serves as a coordination point for Mg(2+). Residue Glu-44 participates in K(+) binding. Positions 57 and 100 each coordinate L-methionine. Residues 100 to 110 (QSVDIAQGVDR) are flexible loop. Residues 165-167 (DAK), 231-232 (KF), Asp-240, 246-247 (RK), Ala-263, and Lys-267 each bind ATP. Asp-240 is an L-methionine binding site. Lys-271 provides a ligand contact to L-methionine.

It belongs to the AdoMet synthase family. Homotetramer; dimer of dimers. The cofactor is Mg(2+). Requires K(+) as cofactor.

Its subcellular location is the cytoplasm. It catalyses the reaction L-methionine + ATP + H2O = S-adenosyl-L-methionine + phosphate + diphosphate. Its pathway is amino-acid biosynthesis; S-adenosyl-L-methionine biosynthesis; S-adenosyl-L-methionine from L-methionine: step 1/1. In terms of biological role, catalyzes the formation of S-adenosylmethionine (AdoMet) from methionine and ATP. The overall synthetic reaction is composed of two sequential steps, AdoMet formation and the subsequent tripolyphosphate hydrolysis which occurs prior to release of AdoMet from the enzyme. In Marinobacter nauticus (strain ATCC 700491 / DSM 11845 / VT8) (Marinobacter aquaeolei), this protein is S-adenosylmethionine synthase.